Here is a 565-residue protein sequence, read N- to C-terminus: Adenine deaminase (565 aa).

Belongs to the metallo-dependent hydrolases superfamily. Adenine deaminase family. Requires Mn(2+) as cofactor.

It catalyses the reaction adenine + H2O + H(+) = hypoxanthine + NH4(+). This Cereibacter sphaeroides (strain KD131 / KCTC 12085) (Rhodobacter sphaeroides) protein is Adenine deaminase.